Consider the following 532-residue polypeptide: Cytochrome P450 monooxygenase pgmC (532 aa).

Residues 15-32 traverse the membrane as a helical segment; that stretch reads ISTLAVLIGFIALLTAWL. Cys438 is a binding site for heme.

Belongs to the cytochrome P450 family. Heme is required as a cofactor.

It localises to the membrane. The protein operates within pigment biosynthesis. It participates in secondary metabolite biosynthesis. In terms of biological role, cytochrome P450 monooxygenase; part of the gene cluster that mediates the biosynthesis of pleosporalin A, ascomycone A, as well as a third cryptic naphthoquinone derived pigment, all responsible for the coloration of conidia. Involved in the oxidation of fusarubinaldehyde at C-9. PgmC has low substrate-specificity and is also able to use the pgmA product 3-acetonyl-1,6,8-trihydroxy-2-naphthaldehyde as a substrate. The pathway begins with the biosynthesis of the cyclized heptaketide 3-acetonyl-1,6,8-trihydroxy-2-naphthaldehyde by the NR-PKS pgmA. The C-6 hydroxyl group is further methylated by the O-methyltransferase pgmB to yield fusarubinaldehyde which is in turn oxidized by the cytochrome P450 monooxygenase pgmC at C-9. The C-1 hydroxyl group is then methylated spontaneously. Although pgmE, pgmD and pgmH are essential for the production of pleosporalin A, it is not the case for the 2 other final products and it remains difficult to assign a specific function to each enzyme. PgmF and pgmG seem not to be involved in pigment biosynthesis although they were regulated by the cluster-specific transcription factor pgmR. This chain is Cytochrome P450 monooxygenase pgmC, found in Aspergillus terreus (strain NIH 2624 / FGSC A1156).